Reading from the N-terminus, the 394-residue chain is NAD(P)H-quinone oxidoreductase subunit H (394 aa).

The protein belongs to the complex I 49 kDa subunit family. In terms of assembly, NDH-1 can be composed of about 15 different subunits; different subcomplexes with different compositions have been identified which probably have different functions.

It localises to the cellular thylakoid membrane. The enzyme catalyses a plastoquinone + NADH + (n+1) H(+)(in) = a plastoquinol + NAD(+) + n H(+)(out). It catalyses the reaction a plastoquinone + NADPH + (n+1) H(+)(in) = a plastoquinol + NADP(+) + n H(+)(out). In terms of biological role, NDH-1 shuttles electrons from an unknown electron donor, via FMN and iron-sulfur (Fe-S) centers, to quinones in the respiratory and/or the photosynthetic chain. The immediate electron acceptor for the enzyme in this species is believed to be plastoquinone. Couples the redox reaction to proton translocation, and thus conserves the redox energy in a proton gradient. Cyanobacterial NDH-1 also plays a role in inorganic carbon-concentration. This Acaryochloris marina (strain MBIC 11017) protein is NAD(P)H-quinone oxidoreductase subunit H.